The chain runs to 321 residues: tRNA pseudouridine synthase B (321 aa).

The active-site Nucleophile is aspartate 47.

This sequence belongs to the pseudouridine synthase TruB family. Type 1 subfamily.

The catalysed reaction is uridine(55) in tRNA = pseudouridine(55) in tRNA. Functionally, responsible for synthesis of pseudouridine from uracil-55 in the psi GC loop of transfer RNAs. This is tRNA pseudouridine synthase B from Shewanella baltica (strain OS185).